The chain runs to 528 residues: Tyrosine--tRNA ligase, cytoplasmic (528 aa).

Tyrosine 39 contributes to the L-tyrosine binding site. The 'HIGH' region motif lies at 44 to 52; the sequence is TTGKPHVAY. L-tyrosine-binding residues include tyrosine 166, glutamine 170, aspartate 173, and glutamine 188. A 'KMSKS' region motif is present at residues 222 to 226; the sequence is KMSSS. Positions 242 to 247 match the Nuclear localization signal motif; sequence KKKLKK. The interval 332–362 is disordered; it reads EMKKLSNDAYPDASKQKSVPKGSTKNSGTEE. The region spanning 364 to 468 is the tRNA-binding domain; sequence DPSLLDLRVG…SGSAPGERIY (105 aa).

Belongs to the class-I aminoacyl-tRNA synthetase family. Homodimer.

The protein localises to the cytoplasm. Its subcellular location is the nucleus. It catalyses the reaction tRNA(Tyr) + L-tyrosine + ATP = L-tyrosyl-tRNA(Tyr) + AMP + diphosphate + H(+). In terms of biological role, catalyzes the attachment of tyrosine to tRNA(Tyr) in a two-step reaction: tyrosine is first activated by ATP to form Tyr-AMP and then transferred to the acceptor end of tRNA(Tyr). This Xenopus laevis (African clawed frog) protein is Tyrosine--tRNA ligase, cytoplasmic (yars1).